Consider the following 317-residue polypeptide: Melanocyte-stimulating hormone receptor (317 aa).

Topologically, residues Met-1–Glu-37 are extracellular. Asn-29 carries N-linked (GlcNAc...) asparagine glycosylation. Residues Val-38–Ile-63 traverse the membrane as a helical segment. Residues Ala-64 to Pro-72 are Cytoplasmic-facing. A helical transmembrane segment spans residues Thr-73 to Leu-93. Over Glu-94 to Asn-118 the chain is Extracellular. Residues Val-119 to Met-140 form a helical membrane-spanning segment. Topologically, residues Asp-141–Gln-163 are cytoplasmic. A helical membrane pass occupies residues Ala-164–Tyr-183. Residues Asp-184–Cys-191 lie on the Extracellular side of the membrane. A helical membrane pass occupies residues Leu-192–Leu-211. The Cytoplasmic portion of the chain corresponds to Ala-212–Ala-240. A helical transmembrane segment spans residues Val-241 to Leu-266. Residues Cys-267 to Asn-279 are Extracellular-facing. A helical transmembrane segment spans residues Phe-280–Phe-300. At Arg-301 to Trp-317 the chain is on the cytoplasmic side. A lipid anchor (S-palmitoyl cysteine) is attached at Cys-315.

It belongs to the G-protein coupled receptor 1 family. As to quaternary structure, interacts with MGRN1, but does not undergo MGRN1-mediated ubiquitination; this interaction competes with GNAS-binding and thus inhibits agonist-induced cAMP production. Interacts with OPN3; the interaction results in a decrease in MC1R-mediated cAMP signaling and ultimately a decrease in melanin production in melanocytes.

It is found in the cell membrane. Functionally, receptor for MSH (alpha, beta and gamma) and ACTH. The activity of this receptor is mediated by G proteins which activate adenylate cyclase. Mediates melanogenesis, the production of eumelanin (black/brown) and phaeomelanin (red/yellow), via regulation of cAMP signaling in melanocytes. The sequence is that of Melanocyte-stimulating hormone receptor (MC1R) from Hylobates lar (Lar gibbon).